The sequence spans 463 residues: MTDTQSPFSFAAALLQCGSPGQTFSMESLLKPELGEYSPSGENGIDGEESTICSVCCDEASGRHYGVVACFGCKGFFRRTVRAGKNYVCRYSKKCRIDKAGRNVCRSCRFQKCLEVGMEPDAIRPDRDKTGRQKNPRRNTEGSIKKVSVGSILGDLPCLNKFKDDSDDAATSPSSRADSAPMDLRPSFIDESVLTTLTEIENIVIQLQDNFETNQQSLPPMGEAITKPSLIAARTLLNFNGAKGVADANCVSSNLRRMIVFTFDYINTLRPIADLHPSEKLVIARSIISPFCILFCGYQSVAIEAPEHDSIYLPSGHKLPASQLLFTKDSDQKKYILLENKADNVRRNMTEMIIQQLRRLNVTKTEMVALKAIMALDHNVKGLSAESCELLVVARESVQNALFSHLIATFGTAEATSRFAHLLLLIASATRVAYSLSSFFQLSRDVNYEIDYVLEELLFLDRI.

Residues 50-125 (STICSVCCDE…VGMEPDAIRP (76 aa)) constitute a DNA-binding region (nuclear receptor). NR C4-type zinc fingers lie at residues 53-73 (CSVC…CFGC) and 89-113 (CRYS…FQKC). Over residues 121–131 (DAIRPDRDKTG) the composition is skewed to basic and acidic residues. The tract at residues 121–143 (DAIRPDRDKTGRQKNPRRNTEGS) is disordered. The NR LBD domain occupies 199–462 (EIENIVIQLQ…VLEELLFLDR (264 aa)).

This sequence belongs to the nuclear hormone receptor family.

Its subcellular location is the nucleus. Its function is as follows. Orphan nuclear receptor. In Caenorhabditis elegans, this protein is Nuclear hormone receptor family member nhr-3 (nhr-3).